Reading from the N-terminus, the 137-residue chain is Thionin BTH7 (137 aa).

The N-terminal stretch at 1 to 28 is a signal peptide; sequence MATNKSIKSVVICVLILGLVLEQVQVEG. Cystine bridges form between C31-C68, C32-C60, C40-C58, and C44-C54. Residues 75-137 constitute a propeptide, acidic domain; sequence LNLLPESGEP…DGEVIQSVEA (63 aa).

The protein belongs to the plant thionin (TC 1.C.44) family. 4 C-C subfamily.

Its subcellular location is the secreted. Functionally, thionins are small plant proteins which are toxic to animal cells. They seem to exert their toxic effect at the level of the cell membrane. Their precise function is not known. The protein is Thionin BTH7 of Hordeum vulgare (Barley).